The primary structure comprises 368 residues: Single-stranded DNA-binding protein 3 (368 aa).

One can recognise a LisH domain in the interval 16-48 (AREKLALYVYEYLLHVGAQKSAQTFLSEIRWEK). Positions 100–368 (PVLGNIPPND…NYSPSMTMSV (269 aa)) are disordered. The segment covering 126–139 (GSQPSPHAQPPPHN) has biased composition (pro residues). Composition is skewed to low complexity over residues 174-189 (PNMG…PRGM), 211-220 (GPGMPGINMG), and 230-248 (PSSA…TYVG). The span at 252 to 262 (GGGPPGTPIMP) shows a compositional bias: pro residues. The span at 265 to 276 (ADSTNSSDNIYT) shows a compositional bias: polar residues. Residues 295–305 (GSDGPMGGMGG) show a composition bias toward gly residues. A compositionally biased stretch (low complexity) spans 326–337 (NSPNNISGISNP). A compositionally biased stretch (polar residues) spans 353 to 368 (HSFQNDNYSPSMTMSV).

As to expression, expressed in embryonic fibroblasts and chondrocytes.

It localises to the nucleus. May be involved in transcription regulation of the alpha 2(I) collagen gene where it binds to the single-stranded polypyrimidine sequences in the promoter region. The protein is Single-stranded DNA-binding protein 3 (SSBP3) of Gallus gallus (Chicken).